We begin with the raw amino-acid sequence, 398 residues long: Autophagy-related protein 39 (398 aa).

The ATG8-binding motif lies at 8-11; that stretch reads WNLV. Residues 15–50 are disordered; the sequence is RLRKGREGEEQSSKSEISLDSLHESSFAGEDDEDFD. Residues 52–59 carry the ATG11-binding motif; that stretch reads DVLSNTSS. The chain crosses the membrane as a helical span at residues 148-164; sequence VIMLSSLLSMTFSYLAL.

As to quaternary structure, interacts with ATG8 and ATG11.

Its subcellular location is the endoplasmic reticulum membrane. The protein localises to the preautophagosomal structure membrane. In terms of biological role, acts as a receptor for reticulophagy and nucleophagy. Directs autophagic sequestration of double-membrane vesicles derived from the nuclear envelope and perinuclear endoplasmic reticulum (pnER) into autophagosomes. Is not required for the cytoplasm-to-vacuole targeting pathway, mitophagy, pexophagy, and non-selective autophagy. The chain is Autophagy-related protein 39 from Saccharomyces cerevisiae (strain ATCC 204508 / S288c) (Baker's yeast).